The primary structure comprises 218 residues: Octanoyltransferase (218 aa).

In terms of domain architecture, BPL/LPL catalytic spans alanine 32–aspartate 214. Substrate-binding positions include arginine 71–histidine 78, serine 143–glycine 145, and glycine 156–alanine 158. The Acyl-thioester intermediate role is filled by cysteine 174.

This sequence belongs to the LipB family.

It localises to the cytoplasm. The enzyme catalyses octanoyl-[ACP] + L-lysyl-[protein] = N(6)-octanoyl-L-lysyl-[protein] + holo-[ACP] + H(+). It participates in protein modification; protein lipoylation via endogenous pathway; protein N(6)-(lipoyl)lysine from octanoyl-[acyl-carrier-protein]: step 1/2. In terms of biological role, catalyzes the transfer of endogenously produced octanoic acid from octanoyl-acyl-carrier-protein onto the lipoyl domains of lipoate-dependent enzymes. Lipoyl-ACP can also act as a substrate although octanoyl-ACP is likely to be the physiological substrate. In Histophilus somni (strain 129Pt) (Haemophilus somnus), this protein is Octanoyltransferase.